The following is an 86-amino-acid chain: Co-chaperonin GroES (86 aa).

The protein belongs to the GroES chaperonin family. As to quaternary structure, heptamer of 7 subunits arranged in a ring. Interacts with the chaperonin GroEL.

It localises to the cytoplasm. Functionally, together with the chaperonin GroEL, plays an essential role in assisting protein folding. The GroEL-GroES system forms a nano-cage that allows encapsulation of the non-native substrate proteins and provides a physical environment optimized to promote and accelerate protein folding. GroES binds to the apical surface of the GroEL ring, thereby capping the opening of the GroEL channel. This Campylobacter jejuni subsp. jejuni serotype O:6 (strain 81116 / NCTC 11828) protein is Co-chaperonin GroES.